The sequence spans 861 residues: Integrator complex subunit 6-like (861 aa).

Positions 3-227 constitute a VWFA domain; that stretch reads ILLFLIDTSA…QCLESLVQKV (225 aa). A Phosphoserine modification is found at S617.

This is Integrator complex subunit 6-like (Ints6l) from Mus musculus (Mouse).